Reading from the N-terminus, the 252-residue chain is MDALQTQTVNSTTAPQPNYIPGLIAVVGCDGTGKSTLTTDLVKSLQQHWQTERRYLGLLSGEDGDKIKRLPLVGVWLERRLAAKSSKTQSMKTKSPALWAAVIMYCFSLRRMANLRKVQRLAQSGVLVVSDRFPQAEISGFYYDGPGIGVERATGKISMFLAQRERRLYQQMAQYRPELIIRLGIDIETAISRKPDHDYAELQDKIGVMSKIGYNGTKILEIDSRAPYSEVLEQAQKAVSLVAIVSDRRSLT.

An ATP-binding site is contributed by 28–35 (GCDGTGKS).

This sequence to E.coli YghS and YghT.

This is an uncharacterized protein from Escherichia coli O6:H1 (strain CFT073 / ATCC 700928 / UPEC).